The following is a 235-amino-acid chain: Urease accessory protein UreF (235 aa).

The protein belongs to the UreF family. As to quaternary structure, ureD, UreF and UreG form a complex that acts as a GTP-hydrolysis-dependent molecular chaperone, activating the urease apoprotein by helping to assemble the nickel containing metallocenter of UreC. The UreE protein probably delivers the nickel.

The protein resides in the cytoplasm. Functionally, required for maturation of urease via the functional incorporation of the urease nickel metallocenter. The protein is Urease accessory protein UreF of Haemophilus influenzae (strain PittGG).